A 291-amino-acid chain; its full sequence is uncharacterized protein (291 aa).

This is an uncharacterized protein from Haemophilus influenzae (strain ATCC 51907 / DSM 11121 / KW20 / Rd).